The chain runs to 517 residues: MDIIGGQHLRQMWDDLADVYGHKTALICESSGGVVNRYSYLELNQEINRTANLFYTLGIRKGDKVALHLDNCPEFIFCWFGLAKIGAIMVPINARLLREESAWILQNSQACLLVTSAQFYPMYQQIQQEDATQLRHICLTDVALPADDGVSSFTQLKNQQPATLCYAPPLSTDDTAEILFTSGTTSRPKGVVITHYNLRFAGYYSAWQCALRDDDVYLTVMPAFHIDCQCTAAMAAFSAGATFVLVEKYSARAFWGQVQKYRATITECIPMMIRTLMVQPPSANDRQHRLREVMFYLNLSEQEKDAFCERFGVRLLTSYGMTETIVGIIGDRPGDKRRWPSIGRAGFCYEAEIRDDHNRPLPAGEIGEICIKGVPGKTIFKEYFLNPKATAKVLEADGWLHTGDTGYCDEEGFFYFVDRRCNMIKRGGENVSCVELENIIATHPKIQDIVVVGIKDSIRDEAIKAFVVVNEGETLSEEEFFRFCEQNMAKFKVPSYLEIRKDLPRNCSGKIIRKNLK.

It belongs to the ATP-dependent AMP-binding enzyme family.

The catalysed reaction is 4-(trimethylamino)butanoate + ATP + CoA = 4-(trimethylamino)butanoyl-CoA + AMP + diphosphate. It catalyses the reaction crotonobetaine + ATP + CoA = crotonobetainyl-CoA + AMP + diphosphate. The enzyme catalyses (R)-carnitine + ATP + CoA = (R)-carnitinyl-CoA + AMP + diphosphate. It participates in amine and polyamine metabolism; carnitine metabolism. In terms of biological role, catalyzes the transfer of CoA to carnitine, generating the initial carnitinyl-CoA needed for the CaiB reaction cycle. Also has activity toward crotonobetaine and gamma-butyrobetaine. This Escherichia coli O8 (strain IAI1) protein is Crotonobetaine/carnitine--CoA ligase.